The chain runs to 828 residues: USP6 N-terminal-like protein (828 aa).

Met1 bears the N-acetylmethionine mark. In terms of domain architecture, Rab-GAP TBC spans 100-292; sequence GIPLQLRGEV…RIWDIYIFEG (193 aa). A compositionally biased stretch (basic and acidic residues) spans 355–367; that stretch reads DLPEPGKEDEYPK. Positions 355-722 are disordered; the sequence is DLPEPGKEDE…NSGSPKNGKL (368 aa). Phosphoserine occurs at positions 391, 396, and 400. Residues 434-451 are compositionally biased toward basic and acidic residues; sequence KSVEEESKKLKDEADFQR. Positions 465 to 478 are enriched in low complexity; the sequence is NHAAANQNSNATSN. Composition is skewed to basic and acidic residues over residues 498–508 and 535–544; these read RTAKYTMEGKG and KALDAEDGKR. 2 positions are modified to phosphoserine: Ser546 and Ser549. Tyr582 is modified (phosphotyrosine). Ser585 bears the Phosphoserine mark. The span at 592 to 603 shows a compositional bias: polar residues; that stretch reads PSSSPSKVSNKF. Phosphoserine occurs at positions 642, 655, 659, 676, and 680. Composition is skewed to polar residues over residues 648–666 and 673–683; these read TANSSFASPQFSPGTQLNP and STLSVSASPEK. The span at 686–697 shows a compositional bias: low complexity; sequence SRPSPLVLPSSR. Position 716 is a phosphoserine (Ser716). The residue at position 729 (Tyr729) is a Phosphotyrosine. The tract at residues 789-817 is disordered; it reads KASPAAEDASPSGYPYSGPPPPAYHYRNR.

Interacts with EPS8. Widely expressed.

It is found in the golgi apparatus. The protein localises to the cytoplasmic vesicle. In terms of biological role, acts as a GTPase-activating protein for RAB5A and RAB43. Involved in receptor trafficking. In complex with EPS8 inhibits internalization of EGFR. Involved in retrograde transport from the endocytic pathway to the Golgi apparatus. Involved in the transport of Shiga toxin from early and recycling endosomes to the trans-Golgi network. Required for structural integrity of the Golgi complex. This is USP6 N-terminal-like protein (USP6NL) from Homo sapiens (Human).